A 321-amino-acid chain; its full sequence is Large ribosomal subunit protein uL10 (321 aa).

Residues 284–321 are disordered; sequence SAGTAPTGGGAAAAAVEEKKEEPEEESDDDIGFSLFDD. The segment covering 306-321 has biased composition (acidic residues); that stretch reads PEEESDDDIGFSLFDD.

The protein belongs to the universal ribosomal protein uL10 family. P0 forms a pentameric complex by interaction with dimers of P1 and P2. Post-translationally, phosphorylated.

In terms of biological role, ribosomal protein P0 is the functional equivalent of E.coli protein L10. This chain is Large ribosomal subunit protein uL10, found in Oxybasis rubra (Red goosefoot).